The following is a 330-amino-acid chain: Formylaminopyrimidine-binding protein (330 aa).

The first 18 residues, 1-18, serve as a signal peptide directing secretion; that stretch reads MKSFKIISLLLAILFLAS. Cys19 carries N-palmitoyl cysteine lipidation. Cys19 carries S-diacylglycerol cysteine lipidation. Residues 38 to 39, Tyr90, Asn145, Tyr188, and Glu192 each bind substrate; that span reads DW.

It belongs to the NMT1 family. The complex is likely composed of an ATP-binding protein (ThiZ), a transmembrane protein (ThiX) and a solute-binding protein (ThiY).

It is found in the cell membrane. The protein operates within cofactor biosynthesis; thiamine diphosphate biosynthesis. Functionally, participates in a thiamine pyrimidine salvage pathway as part of the ABC transporter complex ThiXYZ involved in the import of thiamine degradation products. Binds the formylaminopyrimidine N-formyl-4-amino-5-aminomethyl-2-methylpyrimidine (FAMP). Does not bind thiamine. The sequence is that of Formylaminopyrimidine-binding protein from Halalkalibacterium halodurans (strain ATCC BAA-125 / DSM 18197 / FERM 7344 / JCM 9153 / C-125) (Bacillus halodurans).